The following is a 51-amino-acid chain: UPF0181 protein HAPS_0710 (51 aa).

The protein belongs to the UPF0181 family.

The protein is UPF0181 protein HAPS_0710 of Glaesserella parasuis serovar 5 (strain SH0165) (Haemophilus parasuis).